Consider the following 967-residue polypeptide: Sulfite dehydrogenase subunit A (967 aa).

The 4Fe-4S Mo/W bis-MGD-type domain occupies 15–71; sequence VEVKETTCYMCACRCGIRVHLRDGEVRYIDGNPNHPLNKGVICAKGSSGIMKQYSPG. Residues Cys-22, Cys-25, Cys-29, and Cys-57 each coordinate [4Fe-4S] cluster.

It belongs to the prokaryotic molybdopterin-containing oxidoreductase family. In terms of assembly, forms a heterotrimeric membrane-bound complex composed of a catalytic heterodimer (SoeAB) and a membrane anchor protein (SoeC). [4Fe-4S] cluster is required as a cofactor. The cofactor is Mo-bis(molybdopterin guanine dinucleotide).

It is found in the cell inner membrane. It catalyses the reaction a quinone + sulfite + H2O = a quinol + sulfate. It carries out the reaction a menaquinone + sulfite + H2O = a menaquinol + sulfate. Functionally, part of the SoeABC complex that catalyzes the oxidation of sulfite to sulfate. The polypeptide is Sulfite dehydrogenase subunit A (Allochromatium vinosum (strain ATCC 17899 / DSM 180 / NBRC 103801 / NCIMB 10441 / D) (Chromatium vinosum)).